The sequence spans 538 residues: Putative cysteine ligase BshC (538 aa).

The stretch at 460 to 484 forms a coiled coil; sequence KINEQIELLERMLKRNVEKKHEVEL.

This sequence belongs to the BshC family.

Functionally, involved in bacillithiol (BSH) biosynthesis. May catalyze the last step of the pathway, the addition of cysteine to glucosamine malate (GlcN-Mal) to generate BSH. The chain is Putative cysteine ligase BshC from Bacillus cereus (strain AH820).